Reading from the N-terminus, the 418-residue chain is L-rhamnose isomerase (418 aa).

Mn(2+)-binding residues include H262, D294, and D296.

The protein belongs to the rhamnose isomerase family. As to quaternary structure, homotetramer. Mn(2+) is required as a cofactor.

It localises to the cytoplasm. The enzyme catalyses L-rhamnopyranose = L-rhamnulose. It participates in carbohydrate degradation; L-rhamnose degradation; glycerone phosphate from L-rhamnose: step 1/3. In terms of biological role, catalyzes the interconversion of L-rhamnose and L-rhamnulose. The polypeptide is L-rhamnose isomerase (Yersinia pseudotuberculosis serotype O:1b (strain IP 31758)).